The chain runs to 327 residues: Interleukin-12 subunit beta (327 aa).

A signal peptide spans 1 to 22 (MCHQKLTISWFAVVLLASPLMA). Positions 23–106 (IWELEKDVYV…LSHSRLLLHK (84 aa)) constitute an Ig-like C2-type domain. Cysteines 50 and 90 form a disulfide. N-linked (GlcNAc...) asparagine glycosylation is found at asparagine 125, asparagine 135, asparagine 223, and asparagine 315. The Fibronectin type-III domain maps to 238 to 327 (PPKNLQLKPL…WSRWVSVPCS (90 aa)).

Belongs to the IL-12B family. As to quaternary structure, heterodimer with IL12A; disulfide-linked. The heterodimer is known as interleukin IL-12. Heterodimer with IL23A; disulfide-linked. The heterodimer is known as interleukin IL-23. Also secreted as a monomer. Interacts with NBR1; this interaction promotes IL-12 secretion.

It localises to the secreted. In terms of biological role, cytokine that can act as a growth factor for activated T and NK cells, enhance the lytic activity of NK/lymphokine-activated killer cells, and stimulate the production of IFN-gamma by resting PBMC. Associates with IL23A to form the IL-23 interleukin, a heterodimeric cytokine which functions in innate and adaptive immunity. IL-23 may constitute with IL-17 an acute response to infection in peripheral tissues. IL-23 binds to a heterodimeric receptor complex composed of IL12RB1 and IL23R, activates the Jak-Stat signaling cascade, stimulates memory rather than naive T-cells and promotes production of pro-inflammatory cytokines. IL-23 induces autoimmune inflammation and thus may be responsible for autoimmune inflammatory diseases and may be important for tumorigenesis. This is Interleukin-12 subunit beta (IL12B) from Mesocricetus auratus (Golden hamster).